The chain runs to 518 residues: Delta(14)-sterol reductase erg24B (518 aa).

N-linked (GlcNAc...) asparagine glycosylation occurs at Asn36. 6 consecutive transmembrane segments (helical) span residues 110–130 (VTMW…FLPG), 150–170 (AFLS…LYGT), 182–202 (YVQV…FVYL), 294–314 (IVLT…MEPA), 321–341 (VIMD…VPFL), and 355–375 (ELGL…YVIF). Residues Lys382, Arg386, Leu409, Trp414, and 421 to 422 (NY) contribute to the NADP(+) site. The chain crosses the membrane as a helical span at residues 464–484 (SRGWGMIFTYFYMIYFGVLLL). NADP(+) contacts are provided by residues Asp490, 494–498 (CKRKY), and Tyr505.

It belongs to the ERG4/ERG24 family.

The protein resides in the endoplasmic reticulum membrane. The protein operates within steroid metabolism; ergosterol biosynthesis. Its function is as follows. Delta(14)-sterol reductase; part of the third module of ergosterol biosynthesis pathway that includes the late steps of the pathway. Catalyzes the reduction of the C14=C15 double bond within 4,4,24-trimethyl ergosta-8,14,24(28)-trienolto produce 4,4-dimethylfecosterol. The third module or late pathway involves the ergosterol synthesis itself through consecutive reactions that mainly occur in the endoplasmic reticulum (ER) membrane. Firstly, the squalene synthase erg9 catalyzes the condensation of 2 farnesyl pyrophosphate moieties to form squalene, which is the precursor of all steroids. Squalene synthase is crucial for balancing the incorporation of farnesyl diphosphate (FPP) into sterol and nonsterol isoprene synthesis. Secondly, squalene is converted into lanosterol by the consecutive action of the squalene epoxidase erg1 and the lanosterol synthase erg7. Then, the delta(24)-sterol C-methyltransferase erg6 methylates lanosterol at C-24 to produce eburicol. Eburicol is the substrate of the sterol 14-alpha demethylase encoded by cyp51A and cyp51B, to yield 4,4,24-trimethyl ergosta-8,14,24(28)-trienol. The C-14 reductase erg24 then reduces the C14=C15 double bond which leads to 4,4-dimethylfecosterol. A sequence of further demethylations at C-4, involving the C-4 demethylation complex containing the C-4 methylsterol oxidases erg25A or erg25B, the sterol-4-alpha-carboxylate 3-dehydrogenase erg26 and the 3-keto-steroid reductase erg27, leads to the production of fecosterol via 4-methylfecosterol. The C-8 sterol isomerase erg2 then catalyzes the reaction which results in unsaturation at C-7 in the B ring of sterols and thus converts fecosterol to episterol. The sterol-C5-desaturase erg3B then catalyzes the introduction of a C-5 double bond in the B ring to produce 5-dehydroepisterol. The 2 other sterol-C5-desaturases, erg3A and erg3C, seem to be less important in ergosterol biosynthesis. The C-22 sterol desaturase erg5 further converts 5-dehydroepisterol into ergosta-5,7,22,24(28)-tetraen-3beta-ol by forming the C-22(23) double bond in the sterol side chain. Finally, ergosta-5,7,22,24(28)-tetraen-3beta-ol is substrate of the C-24(28) sterol reductases erg4A and erg4B to produce ergosterol. Possible alternative sterol biosynthetic pathways might exist from fecosterol to ergosterol, depending on the activities of the erg3 isoforms. In Aspergillus fumigatus (strain ATCC MYA-4609 / CBS 101355 / FGSC A1100 / Af293) (Neosartorya fumigata), this protein is Delta(14)-sterol reductase erg24B.